Reading from the N-terminus, the 386-residue chain is Chaperone protein DnaJ (386 aa).

Residues 6-70 (DYYEVLGVDK…QKRAAYDQYG (65 aa)) enclose the J domain. A CR-type zinc finger spans residues 141–223 (GKDTEVSYKR…CHGTGHEKKT (83 aa)). The Zn(2+) site is built by cysteine 154, cysteine 157, cysteine 171, cysteine 174, cysteine 197, cysteine 200, cysteine 211, and cysteine 214. CXXCXGXG motif repeat units follow at residues 154-161 (CHTCGGNG), 171-178 (CHKCKGSG), 197-204 (CDVCHGTG), and 211-218 (CETCHGTG). Residues 363-386 (LTGQSTEEQQSEGFFDKMKDAFKK) form a disordered region. Over residues 364–374 (TGQSTEEQQSE) the composition is skewed to polar residues. Positions 376–386 (FFDKMKDAFKK) are enriched in basic and acidic residues.

This sequence belongs to the DnaJ family. Homodimer. It depends on Zn(2+) as a cofactor.

The protein resides in the cytoplasm. Its function is as follows. Participates actively in the response to hyperosmotic and heat shock by preventing the aggregation of stress-denatured proteins and by disaggregating proteins, also in an autonomous, DnaK-independent fashion. Unfolded proteins bind initially to DnaJ; upon interaction with the DnaJ-bound protein, DnaK hydrolyzes its bound ATP, resulting in the formation of a stable complex. GrpE releases ADP from DnaK; ATP binding to DnaK triggers the release of the substrate protein, thus completing the reaction cycle. Several rounds of ATP-dependent interactions between DnaJ, DnaK and GrpE are required for fully efficient folding. Also involved, together with DnaK and GrpE, in the DNA replication of plasmids through activation of initiation proteins. The sequence is that of Chaperone protein DnaJ from Tetragenococcus halophilus (Pediococcus halophilus).